Reading from the N-terminus, the 114-residue chain is Large ribosomal subunit protein uL22 (114 aa).

It belongs to the universal ribosomal protein uL22 family. As to quaternary structure, part of the 50S ribosomal subunit.

This protein binds specifically to 23S rRNA; its binding is stimulated by other ribosomal proteins, e.g. L4, L17, and L20. It is important during the early stages of 50S assembly. It makes multiple contacts with different domains of the 23S rRNA in the assembled 50S subunit and ribosome. Functionally, the globular domain of the protein is located near the polypeptide exit tunnel on the outside of the subunit, while an extended beta-hairpin is found that lines the wall of the exit tunnel in the center of the 70S ribosome. The sequence is that of Large ribosomal subunit protein uL22 from Streptococcus pyogenes serotype M5 (strain Manfredo).